Consider the following 321-residue polypeptide: DNA-directed RNA polymerase subunit alpha (321 aa).

Residues 1–235 (MAYQIECLET…DLFSPLKEVP (235 aa)) form an alpha N-terminal domain (alpha-NTD) region. The segment at 252 to 321 (QIPIEQLNLS…TLPPQKAARN (70 aa)) is alpha C-terminal domain (alpha-CTD).

The protein belongs to the RNA polymerase alpha chain family. Homodimer. In cyanobacteria the RNAP catalytic core is composed of 2 alpha, 1 beta, 1 beta', 1 gamma and 1 omega subunit. When a sigma factor is associated with the core the holoenzyme is formed, which can initiate transcription.

The catalysed reaction is RNA(n) + a ribonucleoside 5'-triphosphate = RNA(n+1) + diphosphate. DNA-dependent RNA polymerase catalyzes the transcription of DNA into RNA using the four ribonucleoside triphosphates as substrates. This is DNA-directed RNA polymerase subunit alpha from Thermosynechococcus vestitus (strain NIES-2133 / IAM M-273 / BP-1).